Reading from the N-terminus, the 389-residue chain is cAMP-dependent protein kinase regulatory subunit (389 aa).

Disordered stretches follow at residues 1 to 57 and 87 to 110; these read MSEN…KFAG and SVSA…PPYH. The dimerization and phosphorylation stretch occupies residues 1–128; that stretch reads MSENTFPGRL…RLKKSISGNF (128 aa). The span at 21 to 31 shows a compositional bias: polar residues; it reads AANTEKPSTSH. Positions 34–43 are enriched in basic and acidic residues; the sequence is RVTERDEDKV. Residue Ser-87 is modified to Phosphoserine. Positions 87–105 are enriched in polar residues; it reads SVSAESLNPNPTASSNESW. 3',5'-cyclic AMP is bound by residues 129–258, Glu-207, Arg-216, 261–377, Glu-327, and Arg-336; these read LFNH…FLEE and LLST…GVEE.

Belongs to the cAMP-dependent kinase regulatory chain family. In terms of assembly, tetramer, composed of 2 regulatory (R) and 2 catalytic (C) subunits. In the presence of cAMP it dissociates into 2 active monomeric C subunits and an R dimer.

The protein is cAMP-dependent protein kinase regulatory subunit (pkar) of Blumeria graminis (Powdery mildew).